The primary structure comprises 446 residues: MENISDLWNSALKELEKKVSKPSYETWLKSTTAHNLKKDVLTITAPNEFARDWLESHYSELISETLYDLTGAKLAIRFIIPQSQAEEDIDLPSVKQKHAHDESNHLPQSMLNPKYTFDTFVIGSGNRFAHAASLAVAEAPAKAYNPLFIYGGVGLGKTHLMHAIGHYVIEHNPNAKVVYLSSEKFTNEFINSIRDNKAVDFRNKYRNVDVLLIDDIQFLAGKEQTQEEFFHTFNALHEESKQIVISSDRPPKEIPTLEDRLRSRFEWGLITDITPPDLETRIAILRKKAKAEGLDIPNEVMLYIANQIDSNIRELEGALIRVVAYSSLINKDMNADLAAEALKNIIPNSIPRIISISDIQKAVGGVYQVKLEDFKAKKRTKSVAFPRQIAMYLSRELTDSSLPKIGEEFGGRDHTTVIHAHEKISKLLKTDTQLQKHVEEVKDILK.

The tract at residues 1-81 (MENISDLWNS…AKLAIRFIIP (81 aa)) is domain I, interacts with DnaA modulators. The interval 81-109 (PQSQAEEDIDLPSVKQKHAHDESNHLPQS) is domain II. The segment at 110 to 326 (MLNPKYTFDT…GALIRVVAYS (217 aa)) is domain III, AAA+ region. Residues Gly154, Gly156, Lys157, and Thr158 each contribute to the ATP site. A domain IV, binds dsDNA region spans residues 327–446 (SLINKDMNAD…HVEEVKDILK (120 aa)).

It belongs to the DnaA family. As to quaternary structure, oligomerizes as a right-handed, spiral filament on DNA at oriC.

It localises to the cytoplasm. Plays an essential role in the initiation and regulation of chromosomal replication. ATP-DnaA binds to the origin of replication (oriC) to initiate formation of the DNA replication initiation complex once per cell cycle. Binds the DnaA box (a 9 base pair repeat at the origin) and separates the double-stranded (ds)DNA. Forms a right-handed helical filament on oriC DNA; dsDNA binds to the exterior of the filament while single-stranded (ss)DNA is stabiized in the filament's interior. The ATP-DnaA-oriC complex binds and stabilizes one strand of the AT-rich DNA unwinding element (DUE), permitting loading of DNA polymerase. After initiation quickly degrades to an ADP-DnaA complex that is not apt for DNA replication. Binds acidic phospholipids. The chain is Chromosomal replication initiator protein DnaA from Bacillus mycoides (strain KBAB4) (Bacillus weihenstephanensis).